A 376-amino-acid polypeptide reads, in one-letter code: Putative F-box/FBD/LRR-repeat protein At5g52460 (376 aa).

Positions arginine 16 to leucine 75 constitute an F-box domain. LRR repeat units follow at residues cysteine 131–proline 154 and phenylalanine 199–lysine 224. The FBD domain occupies cysteine 296–threonine 348.

The protein is Putative F-box/FBD/LRR-repeat protein At5g52460 (EDA41) of Arabidopsis thaliana (Mouse-ear cress).